The following is a 114-amino-acid chain: Large ribosomal subunit protein uL24 (114 aa).

The protein belongs to the universal ribosomal protein uL24 family. In terms of assembly, part of the 50S ribosomal subunit.

In terms of biological role, one of two assembly initiator proteins, it binds directly to the 5'-end of the 23S rRNA, where it nucleates assembly of the 50S subunit. Functionally, one of the proteins that surrounds the polypeptide exit tunnel on the outside of the subunit. The polypeptide is Large ribosomal subunit protein uL24 (Thermomicrobium roseum (strain ATCC 27502 / DSM 5159 / P-2)).